A 740-amino-acid chain; its full sequence is Polyribonucleotide nucleotidyltransferase (740 aa).

Residues D514 and D520 each coordinate Mg(2+). The 60-residue stretch at 580-639 (PRIITVKIPVDKIGEVIGPKRQMINQIQEDTGAEITIEDDGTIYIGAADGPAAEAARATI) folds into the KH domain. One can recognise an S1 motif domain in the interval 651-723 (GERILGSVVK…SRGKLSLIPV (73 aa)).

The protein belongs to the polyribonucleotide nucleotidyltransferase family. As to quaternary structure, homotrimer. The cofactor is Mg(2+).

Its subcellular location is the cytoplasm. The catalysed reaction is RNA(n+1) + phosphate = RNA(n) + a ribonucleoside 5'-diphosphate. In terms of biological role, involved in mRNA degradation. Catalyzes the phosphorolysis of single-stranded polyribonucleotides processively in the 3'- to 5'-direction. This Streptomyces antibioticus protein is Polyribonucleotide nucleotidyltransferase.